Consider the following 382-residue polypeptide: MSNATNNTLGSLLPQLEAAANSNSLYGGMVPNLRFNITMIVIWGILLTIHVVQLLMRQYWFSIAFICTGILEVLGFIGRTWSHSNVADMDAFLLNMICLTIAPVFTMGGIYYQLAKLIEVYGHRFSLLPSPMAYSFIFICSDIVSLVVQAVGGGLCGVAVTDGTSTTTGNHVFIAGLAIQVASMAIFLMLWFHFLFRIYISVRWEHINSRPISLSLLKISQTEVDYLYREKFHFLRLEPKRWVFHYFNLAMTVAVLTIFTRCCYRLAELVVGWDGYLITHEWYFIILDALMMAIATVTLTIFHPGFAFKGRSTSIPITPGHVDPETLPHTDDVEDILDTSDSKQFDIEKEEFQASMKYPISTFKQFMSKIANLFSSKKKAKL.

At 1-34 the chain is on the extracellular side; the sequence is MSNATNNTLGSLLPQLEAAANSNSLYGGMVPNLR. N-linked (GlcNAc...) asparagine glycans are attached at residues N3 and N6. Residues 35 to 55 traverse the membrane as a helical segment; sequence FNITMIVIWGILLTIHVVQLL. Topologically, residues 56–57 are cytoplasmic; the sequence is MR. The helical transmembrane segment at 58–78 threads the bilayer; that stretch reads QYWFSIAFICTGILEVLGFIG. At 79-90 the chain is on the extracellular side; the sequence is RTWSHSNVADMD. A helical transmembrane segment spans residues 91-111; that stretch reads AFLLNMICLTIAPVFTMGGIY. Residues 112 to 135 are Cytoplasmic-facing; that stretch reads YQLAKLIEVYGHRFSLLPSPMAYS. Residues 136-156 traverse the membrane as a helical segment; it reads FIFICSDIVSLVVQAVGGGLC. Residues 157–171 are Extracellular-facing; sequence GVAVTDGTSTTTGNH. The helical transmembrane segment at 172 to 192 threads the bilayer; that stretch reads VFIAGLAIQVASMAIFLMLWF. Over 193-241 the chain is Cytoplasmic; the sequence is HFLFRIYISVRWEHINSRPISLSLLKISQTEVDYLYREKFHFLRLEPKR. A helical membrane pass occupies residues 242–262; sequence WVFHYFNLAMTVAVLTIFTRC. Residues 263 to 281 are Extracellular-facing; it reads CYRLAELVVGWDGYLITHE. The chain crosses the membrane as a helical span at residues 282 to 302; it reads WYFIILDALMMAIATVTLTIF. Topologically, residues 303-382 are cytoplasmic; it reads HPGFAFKGRS…LFSSKKKAKL (80 aa).

The protein belongs to the lipid-translocating exporter (LTE) (TC 9.A.26.1) family.

The protein localises to the cell membrane. Functionally, catalyzes the ATP-dependent translocation of sphingoid long-chain bases (LCBs) from the cytoplasmic site toward the extracytoplasmic side of the membrane (flip-flop). Involved in the establishment of the functional lipid asymmetry of the plasma membrane. Regulates intracellular levels of LCBs, sphingolipid precursors that are growth inhibitory at increased levels. The sequence is that of Sphingoid long-chain base transporter RSB1 (RSB1) from Saccharomyces cerevisiae (strain RM11-1a) (Baker's yeast).